The sequence spans 276 residues: Probable endonuclease LCL3 (276 aa).

A helical membrane pass occupies residues 17-37; sequence FNVVILSIFFSGSFIGAWAFF. Residues 58–263 form the TNase-like domain; sequence RWLFGKVTAV…KARRRGIWSQ (206 aa). Residue R154 is part of the active site. Ca(2+) is bound at residue D159. Catalysis depends on residues E162 and R202.

This sequence belongs to the LCL3 family.

The protein resides in the mitochondrion. It is found in the membrane. This Zygosaccharomyces rouxii (strain ATCC 2623 / CBS 732 / NBRC 1130 / NCYC 568 / NRRL Y-229) protein is Probable endonuclease LCL3 (LCL3).